The following is a 139-amino-acid chain: Putative pre-16S rRNA nuclease (139 aa).

It belongs to the YqgF nuclease family.

Its subcellular location is the cytoplasm. Its function is as follows. Could be a nuclease involved in processing of the 5'-end of pre-16S rRNA. The chain is Putative pre-16S rRNA nuclease from Streptococcus equi subsp. zooepidemicus (strain H70).